Consider the following 218-residue polypeptide: Imidazole glycerol phosphate synthase subunit HisH (218 aa).

The Glutamine amidotransferase type-1 domain occupies 7-211 (STVIIDTGCA…LALDKASLDA (205 aa)). Cys82 (nucleophile) is an active-site residue. Catalysis depends on residues His186 and Glu188.

Heterodimer of HisH and HisF.

Its subcellular location is the cytoplasm. It catalyses the reaction 5-[(5-phospho-1-deoxy-D-ribulos-1-ylimino)methylamino]-1-(5-phospho-beta-D-ribosyl)imidazole-4-carboxamide + L-glutamine = D-erythro-1-(imidazol-4-yl)glycerol 3-phosphate + 5-amino-1-(5-phospho-beta-D-ribosyl)imidazole-4-carboxamide + L-glutamate + H(+). The catalysed reaction is L-glutamine + H2O = L-glutamate + NH4(+). Its pathway is amino-acid biosynthesis; L-histidine biosynthesis; L-histidine from 5-phospho-alpha-D-ribose 1-diphosphate: step 5/9. In terms of biological role, IGPS catalyzes the conversion of PRFAR and glutamine to IGP, AICAR and glutamate. The HisH subunit catalyzes the hydrolysis of glutamine to glutamate and ammonia as part of the synthesis of IGP and AICAR. The resulting ammonia molecule is channeled to the active site of HisF. This is Imidazole glycerol phosphate synthase subunit HisH from Shewanella sediminis (strain HAW-EB3).